Reading from the N-terminus, the 925-residue chain is Protein PDC2 (925 aa).

Residues Asp63–Val138 enclose the HTH CENPB-type domain. Disordered stretches follow at residues Asp510–Ser596, Asn674–Ala693, and Pro904–Phe925. Polar residues predominate over residues Gln513–Glu537. Over residues Asn538–Ser563 the composition is skewed to low complexity. The segment covering Lys565 to Ser596 has biased composition (polar residues). Residues Asn674 to Asp686 are compositionally biased toward basic and acidic residues. A compositionally biased stretch (polar residues) spans Pro904–Leu916.

Its function is as follows. Essential for the synthesis of pyruvate decarboxylase. May be important for a high basal level of PDC gene expression or play a positive role in the autoregulation control of PDC1 and PDC5. In Saccharomyces cerevisiae (strain ATCC 204508 / S288c) (Baker's yeast), this protein is Protein PDC2 (PDC2).